A 172-amino-acid polypeptide reads, in one-letter code: 3-phenylpropionate/cinnamic acid dioxygenase subunit beta (172 aa).

Belongs to the bacterial ring-hydroxylating dioxygenase beta subunit family. In terms of assembly, this dioxygenase system consists of four proteins: the two subunits of the hydroxylase component (HcaE and HcaF), a ferredoxin (HcaC) and a ferredoxin reductase (HcaD).

It carries out the reaction 3-phenylpropanoate + NADH + O2 + H(+) = 3-(cis-5,6-dihydroxycyclohexa-1,3-dien-1-yl)propanoate + NAD(+). The enzyme catalyses (E)-cinnamate + NADH + O2 + H(+) = (2E)-3-(cis-5,6-dihydroxycyclohexa-1,3-dien-1-yl)prop-2-enoate + NAD(+). It participates in aromatic compound metabolism; 3-phenylpropanoate degradation. Part of the multicomponent 3-phenylpropionate dioxygenase. Converts 3-phenylpropionic acid (PP) and cinnamic acid (CI) into 3-phenylpropionate-dihydrodiol (PP-dihydrodiol) and cinnamic acid-dihydrodiol (CI-dihydrodiol), respectively. The sequence is that of 3-phenylpropionate/cinnamic acid dioxygenase subunit beta from Escherichia coli O157:H7.